We begin with the raw amino-acid sequence, 403 residues long: Interferon-induced protein with tetratricopeptide repeats 3 (403 aa).

TPR repeat units follow at residues 94 to 127 (LVTWGNYAWIYYHMGRLSEAQAYVDKVRQVCQKF), 136 to 169 (PELECEEGWTRLKCGRNERAKMCFEKALEEKPKD), 172 to 206 (CSSGMAIAMFRLEEKPEKQFSVDALKQAMELNPQN), and 241 to 274 (TDVLQKAAQFYKKKGNLDRAIELLGKALRSTVNN).

It belongs to the IFIT family. As to quaternary structure, component of an interferon-dependent multiprotein complex, at least composed of IFIT1, IFIT2 and IFIT3. Interacts with IFIT1 and IFIT2. Interacts (via N-terminus) with MAVS, TBK1, TRAF6 and RIGI. Interacts with COPS5.

The protein localises to the cytoplasm. It is found in the mitochondrion. In terms of biological role, IFN-induced antiviral protein which acts as an inhibitor of cellular as well as viral processes, cell migration, proliferation, signaling, and viral replication. Enhances MAVS-mediated host antiviral responses by serving as an adapter bridging TBK1 to MAVS which leads to the activation of TBK1 and phosphorylation of IRF3 and phosphorylated IRF3 translocates into nucleus to promote antiviral gene transcription. Exhibits an antiproliferative activity via the up-regulation of cell cycle negative regulators CDKN1A/p21 and CDKN1B/p27. Normally, CDKN1B/p27 turnover is regulated by COPS5, which binds CDKN1B/p27 in the nucleus and exports it to the cytoplasm for ubiquitin-dependent degradation. IFIT3 sequesters COPS5 in the cytoplasm, thereby increasing nuclear CDKN1B/p27 protein levels. Up-regulates CDKN1A/p21 by down-regulating MYC, a repressor of CDKN1A/p21. Can negatively regulate the apoptotic effects of IFIT2. The protein is Interferon-induced protein with tetratricopeptide repeats 3 (Ifit3) of Mus musculus (Mouse).